The primary structure comprises 379 residues: MEKLILRRVDRQNEEMILNFGPQHPSTHGVINFLVETDGEVLKRATPDVGYLHRSIEKIGELVGYPGFMPYTDRVDYVAAMFANEGYAIAVERLLKIEVPQRAQWLRAISCELCRIASHLVSVGTMVMDIGAFTPMLHGIRERETINDLLEALCGARLTYNYHRIGGVAFDLPEGWRDKVLHFLDHFDKFLAEFDRLISFNEIYVKRLANVAVIPGPMAINYGLVGPNLRGSGVDWDVRRDLPYGAYPNFKFDVPVGKGFFGTAGDSFDRYYVRCLEMAESSKIVRQALDSLPEGEITAKVPRNIKPEAGEALGRVESARGELAYYVISDGTNKAYRVRARTGSFTAMCIIEDISRGLMVADLVALISSLDVVAPEIDR.

It belongs to the complex I 49 kDa subunit family. In terms of assembly, NDH-1 is composed of 14 different subunits. Subunits NuoB, C, D, E, F, and G constitute the peripheral sector of the complex.

It localises to the cell inner membrane. It catalyses the reaction a quinone + NADH + 5 H(+)(in) = a quinol + NAD(+) + 4 H(+)(out). NDH-1 shuttles electrons from NADH, via FMN and iron-sulfur (Fe-S) centers, to quinones in the respiratory chain. The immediate electron acceptor for the enzyme in this species is believed to be ubiquinone. Couples the redox reaction to proton translocation (for every two electrons transferred, four hydrogen ions are translocated across the cytoplasmic membrane), and thus conserves the redox energy in a proton gradient. The polypeptide is NADH-quinone oxidoreductase subunit D 2 (Anaeromyxobacter dehalogenans (strain 2CP-C)).